Consider the following 155-residue polypeptide: Protein SREK1IP1 (155 aa).

A CCHC-type zinc finger spans residues 13 to 30 (AGCKKCGYPGHLTFECRN). A disordered region spans residues 43–155 (DVSSTSTEDS…SSSSQSSSSD (113 aa)). A compositionally biased stretch (basic and acidic residues) spans 58–74 (EVARAPADKKNVTDTGK). Residues 75 to 93 (KKLKRKKEKKLKKHRKRLH) are compositionally biased toward basic residues. A compositionally biased stretch (basic and acidic residues) spans 94–103 (SSSESDDNSK). The segment covering 104–137 (AKKRKSQKKEKRVKHKAKKGKQHKKDKRKEKRER) has biased composition (basic residues). Residues 140 to 155 (SSSSSSSSSSQSSSSD) show a composition bias toward low complexity.

Its function is as follows. Possible splicing regulator involved in the control of cellular survival. The protein is Protein SREK1IP1 (srek1ip1) of Xenopus tropicalis (Western clawed frog).